We begin with the raw amino-acid sequence, 327 residues long: Biotin synthase (327 aa).

A Radical SAM core domain is found at 51-278 (QTIQLSTLMS…KSYVRLSAGR (228 aa)). Positions 66, 70, and 73 each coordinate [4Fe-4S] cluster. Residues cysteine 110, cysteine 141, cysteine 201, and arginine 273 each contribute to the [2Fe-2S] cluster site.

This sequence belongs to the radical SAM superfamily. Biotin synthase family. As to quaternary structure, homodimer. [4Fe-4S] cluster serves as cofactor. Requires [2Fe-2S] cluster as cofactor.

The catalysed reaction is (4R,5S)-dethiobiotin + (sulfur carrier)-SH + 2 reduced [2Fe-2S]-[ferredoxin] + 2 S-adenosyl-L-methionine = (sulfur carrier)-H + biotin + 2 5'-deoxyadenosine + 2 L-methionine + 2 oxidized [2Fe-2S]-[ferredoxin]. The protein operates within cofactor biosynthesis; biotin biosynthesis; biotin from 7,8-diaminononanoate: step 2/2. In terms of biological role, catalyzes the conversion of dethiobiotin (DTB) to biotin by the insertion of a sulfur atom into dethiobiotin via a radical-based mechanism. This is Biotin synthase from Histophilus somni (strain 2336) (Haemophilus somnus).